A 536-amino-acid polypeptide reads, in one-letter code: Apolipoprotein N-acyltransferase (536 aa).

7 helical membrane-spanning segments follow: residues 10–30, 42–62, 76–96, 107–127, 136–158, 181–201, and 212–232; these read IASG…LLAG, AWPV…GSAA, WWFG…AFLV, AAIC…FALA, LRIL…LLTG, IGIW…AVLI, and AVPA…GIRL. The 254-residue stretch at 248-501 folds into the CN hydrolase domain; sequence MQPNLPQDAR…EGVLDSGLPA (254 aa). Glutamate 295 (proton acceptor) is an active-site residue. Lysine 360 is an active-site residue. The Nucleophile role is filled by cysteine 413. A helical transmembrane segment spans residues 509–529; sequence ARVGELPAAVLVALVMMLVLL.

Belongs to the CN hydrolase family. Apolipoprotein N-acyltransferase subfamily.

It localises to the cell inner membrane. The enzyme catalyses N-terminal S-1,2-diacyl-sn-glyceryl-L-cysteinyl-[lipoprotein] + a glycerophospholipid = N-acyl-S-1,2-diacyl-sn-glyceryl-L-cysteinyl-[lipoprotein] + a 2-acyl-sn-glycero-3-phospholipid + H(+). It participates in protein modification; lipoprotein biosynthesis (N-acyl transfer). Catalyzes the phospholipid dependent N-acylation of the N-terminal cysteine of apolipoprotein, the last step in lipoprotein maturation. This Rhodopseudomonas palustris (strain ATCC BAA-98 / CGA009) protein is Apolipoprotein N-acyltransferase.